A 215-amino-acid chain; its full sequence is 2-phospho-L-lactate guanylyltransferase (215 aa).

Belongs to the CofC family. Homodimer.

The enzyme catalyses (2S)-2-phospholactate + GTP + H(+) = (2S)-lactyl-2-diphospho-5'-guanosine + diphosphate. It participates in cofactor biosynthesis; coenzyme F420 biosynthesis. Guanylyltransferase that catalyzes the activation of (2S)-2-phospholactate (2-PL) as (2S)-lactyl-2-diphospho-5'-guanosine, via the condensation of 2-PL with GTP. It is involved in the biosynthesis of coenzyme F420, a hydride carrier cofactor. The chain is 2-phospho-L-lactate guanylyltransferase from Methanococcoides burtonii (strain DSM 6242 / NBRC 107633 / OCM 468 / ACE-M).